The following is a 426-amino-acid chain: MNSNKELMQRRSQAIPRGVGQIHPIFADRAENCRVWDVEGREYLDFAGGIAVLNTGHLHPKVVAAVEAQLKKLSHTCFQVLAYEPYLELCEIMNQKVPGDFAKKTLLVTTGSEAVENAVKIARAATKRSGTIAFSGAYHGRTHYTLALTGKVNPYSAGMGLMPGHVYRALYPCPLHGISEDDAIASIHRIFKNDAAPEDIAAIVIEPVQGEGGFYASSPAFMQRLRALCDEHGIMLIADEVQSGAGRTGTLFAMEQMGVAPDLTTFAKSIAGGFPLAGVTGRAEVMDAVAPGGLGGTYAGNPIACVAALEVLKVFEQENLLQKANDLGQKLKDGLLAIAEKHPEIGDVRGLGAMIAIELFEDGDHNKPDAKLTAEIVARARDKGLILLSCGPYYNVLRILVPLTIEDAQIRQGLEIISQCFDEAKQ.

Pyridoxal 5'-phosphate-binding positions include 111-112 (GS) and glutamine 242. An N6-(pyridoxal phosphate)lysine modification is found at lysine 268. A pyridoxal 5'-phosphate-binding site is contributed by threonine 297.

This sequence belongs to the class-III pyridoxal-phosphate-dependent aminotransferase family. Homotetramer. Requires pyridoxal 5'-phosphate as cofactor.

The catalysed reaction is 4-aminobutanoate + 2-oxoglutarate = succinate semialdehyde + L-glutamate. It catalyses the reaction 5-aminopentanoate + 2-oxoglutarate = 5-oxopentanoate + L-glutamate. It participates in amino-acid degradation; 4-aminobutanoate degradation. Its pathway is amino-acid degradation. In terms of biological role, pyridoxal phosphate-dependent enzyme that catalyzes transamination between primary amines and alpha-keto acids. Catalyzes the transfer of the amino group from gamma-aminobutyrate (GABA) to alpha-ketoglutarate (KG) to yield succinic semialdehyde (SSA) and glutamate. Thereby functions in a GABA degradation pathway that allows some E.coli strains to utilize GABA as a nitrogen source for growth. Also catalyzes the conversion of 5-aminovalerate to glutarate semialdehyde, as part of a L-lysine degradation pathway that proceeds via cadaverine, glutarate and L-2-hydroxyglutarate. The sequence is that of 4-aminobutyrate aminotransferase GabT (gabT) from Escherichia coli (strain K12).